The primary structure comprises 872 residues: Probably inactive leucine-rich repeat receptor-like protein kinase At5g06940 (872 aa).

The first 26 residues, 1 to 26, serve as a signal peptide directing secretion; sequence MATRFKHQFSISLALTFFFFFTKTFS. Topologically, residues 27-540 are extracellular; that stretch reads FTENEELGNL…RSNFHKKGGK (514 aa). N-linked (GlcNAc...) asparagine glycosylation is found at N55, N63, and N86. LRR repeat units lie at residues 79-98, 99-122, 123-146, 147-169, 171-193, 195-217, 219-243, 244-267, 269-292, 294-316, 317-340, 341-365, 367-389, 391-412, 413-435, 436-459, 460-482, and 484-506; these read SINLQSLNLSGEISDSICDL, PYLTHLDLSLNFFNQPIPLQLSRC, VTLETLNLSSNLIWGTIPDQISEF, SSLKVIDFSSNHVEGMIPEDLGL, FNLQVLNLGSNLLTGIVPPAIGK, SELVVLDLSENSYLVSEIPSFLG, LDKLEQLLLHRSGFHGEIPTSFVGL, TSLRTLDLSLNNLSGEIPRSLGPS, KNLVSLDVSQNKLSGSFPSGICSG, RLINLSLHSNFFEGSLPNSIGEC, LSLERLQVQNNGFSGEFPVVLWKL, PRIKIIRADNNRFTGQVPESVSLAS, LEQVEIVNNSFSGEIPHGLGLVK, LYKFSASQNRFSGELPPNFCDS, PVLSIVNISHNRLLGKIPELKNC, KKLVSLSLAGNAFTGEIPPSLADL, HVLTYLDLSDNSLTGLIPQGLQN, and KLALFNVSFNGLSGEVPHSLVSG. The N-linked (GlcNAc...) asparagine glycan is linked to N129. N-linked (GlcNAc...) asparagine glycosylation is present at N255. N297 carries an N-linked (GlcNAc...) asparagine glycan. Residue N374 is glycosylated (N-linked (GlcNAc...) asparagine). The N-linked (GlcNAc...) asparagine glycan is linked to N419. A glycan (N-linked (GlcNAc...) asparagine) is linked at N489. The chain crosses the membrane as a helical span at residues 541–561; the sequence is ALVLSLICLALAIATFLAVLY. Topologically, residues 562-872 are cytoplasmic; that stretch reads RYSRKKVQFK…ISSSVSPVSA (311 aa). The residue at position 585 (T585) is a Phosphothreonine. A Protein kinase domain is found at 589–863; the sequence is LMKVVNESCP…VKVIKLLEGI (275 aa). ATP is bound by residues 595 to 603 and K617; that span reads ESCPSGSEV. Phosphotyrosine is present on residues Y662, Y699, Y754, and Y761.

This sequence belongs to the protein kinase superfamily. Ser/Thr protein kinase family.

It is found in the membrane. The protein is Probably inactive leucine-rich repeat receptor-like protein kinase At5g06940 of Arabidopsis thaliana (Mouse-ear cress).